The following is a 224-amino-acid chain: Glutamate/aspartate import permease protein GltK (224 aa).

At 1–19 (MYEFDWSSIVPSLPYLLDG) the chain is on the periplasmic side. The chain crosses the membrane as a helical span at residues 20-40 (LVITLKITVTAVVIGILWGTM). Residues 20-216 (LVITLKITVT…VISLSASLLV (197 aa)) form the ABC transmembrane type-1 domain. At 41-67 (LAVMRLSSFAPVAWFAKAYVNVFRSIP) the chain is on the cytoplasmic side. The chain crosses the membrane as a helical span at residues 68 to 88 (LVMVLLWFYLIVPGFLQNVLG). Over 89-94 (LSPKND) the chain is Periplasmic. A helical transmembrane segment spans residues 95–112 (IRLISAMVAFSMFEAAYY). Residues 113-154 (SEIIRAGIQSISRGQSSAALALGMTHWQSMKLIILPQAFRAM) are Cytoplasmic-facing. Residues 155-175 (VPLLLTQGIVLFQDTSLVYVL) form a helical membrane-spanning segment. Residues 176 to 196 (SLADFFRTASTIGERDGTQVE) are Periplasmic-facing. The chain crosses the membrane as a helical span at residues 197–217 (MILFAGFVYFVISLSASLLVS). Residues 218–224 (YLKRRTA) are Cytoplasmic-facing.

This sequence belongs to the binding-protein-dependent transport system permease family. HisMQ subfamily. As to quaternary structure, the complex is composed of two ATP-binding proteins (GltL), two transmembrane proteins (GltJ and GltK) and a solute-binding protein (GltI).

It localises to the cell inner membrane. Functionally, part of the ABC transporter complex GltIJKL involved in glutamate and aspartate uptake. Probably responsible for the translocation of the substrate across the membrane. The polypeptide is Glutamate/aspartate import permease protein GltK (gltK) (Escherichia coli O157:H7).